Reading from the N-terminus, the 740-residue chain is MSKIIYTKTDEAPALATLSFLPIVKAFAQTAGVDVETSDISVAARVLAEFPEYLTEEQRVPNNLEALGKLTQDPNANIIKLPNISASVQQLKAAIKELQGKGYAIPDFPDEPKNAEEEEIRRRYGKSLGSSVNPVLREGNSDRRAPKAVKNYARKHPHSMGEWKQWSQTHVSHMHSGDFYDGEQSMTLDKARTVRMELLLEDGTTKVLKPKIALLDKEVIDLMFMSKKALLEFYEREMEDCREAGILFSLHVKATMMKVSHPIVFGHAVRIYYKDAFQKHGALFDELGINVNNGMASLYEKITELPASLREEIERDLHACQVHRPRLAMVDSSKGITNFHSPSDVIVDASMPAMIRNGGKMWGADGKLYDCKAVMPESTFARIYQEMINFCKWHGNFDPTTMGTVPNVGLMAQKAEEYGSHDKTFESSDNGIARIVDIDSGEVLLEQRVEKGDIWRMCQTKDDPIQDWVKLAVRRARESDTPVIFWLDPYRPHENELIKKVKTYLKDHDTNGLHIEIMSQVRAMRYTLERVARGLDTISATGNILRDYLTDLFPILELGTSAKMLSVVPLMKGGGLFETGAGGSAPKHVQQLIEENHLRWDSLGEFLALTESLEHLAKNDDNAKAKVLADALDRATETLLLNDKSPSRKTGELDNRGSHFYLAKYWAEELAAQDENSELKAQFAPLAQKLEENEAAIVEQLNEVQGKSMDLKGYYLADEALAEKAMRPSPLFNEAIASLS.

NADP(+)-binding residues include N83 and S85. 5 residues coordinate D-threo-isocitrate: S130, N133, R137, R143, and K253. N133 serves as a coordination point for NADP(+). Mg(2+) is bound at residue D348. D-threo-isocitrate contacts are provided by Y418 and R546. Positions 547 and 551 each coordinate Mg(2+). S584, H588, R599, D601, and R648 together coordinate NADP(+).

The protein belongs to the monomeric-type IDH family. Monomer. Requires Mg(2+) as cofactor. Mn(2+) is required as a cofactor.

The enzyme catalyses D-threo-isocitrate + NADP(+) = 2-oxoglutarate + CO2 + NADPH. With respect to regulation, IDH activity is not significantly affected by monovalent cations. The combined addition of Mn(2+) and another divalent cation results in the decrease of the activity. Functionally, catalyzes the oxidative decarboxylation of isocitrate to 2-oxoglutarate and carbon dioxide with the concomitant reduction of NADP(+). Cannot use NAD(+). The polypeptide is Isocitrate dehydrogenase [NADP] 2 (Psychrobacter sp. (strain 13A)).